Reading from the N-terminus, the 109-residue chain is ATPase inhibitor mai-2, mitochondrial (109 aa).

Disordered stretches follow at residues 18-39 (FSAG…SIRD) and 73-109 (EEVK…LGKE). The span at 21 to 35 (GGHGDGAGRGGGSGG) shows a compositional bias: gly residues. Residues 55-109 (YFYKKQKAQLQELREHIQEEVKHHEGQLENHKKVLERHQQRISEIEAQERALGKE) adopt a coiled-coil conformation.

This sequence belongs to the ATPase inhibitor family.

Its subcellular location is the mitochondrion. In terms of biological role, thought to be a regulatory component of the ATP-synthesizing complex in the mitochondria. Activity is pH dependent. This is ATPase inhibitor mai-2, mitochondrial (mai-2) from Caenorhabditis elegans.